The following is a 239-amino-acid chain: Ribosomal RNA small subunit methyltransferase G (239 aa).

S-adenosyl-L-methionine contacts are provided by residues Gly-77, Phe-82, 128-129 (AE), and Arg-147. Residues 216–239 (EKKKQTPKKYPRKPGTPNKSPIEG) form a disordered region.

Belongs to the methyltransferase superfamily. RNA methyltransferase RsmG family.

It is found in the cytoplasm. Its function is as follows. Specifically methylates the N7 position of guanine in position 535 of 16S rRNA. The polypeptide is Ribosomal RNA small subunit methyltransferase G (Bacillus pumilus (strain SAFR-032)).